Consider the following 304-residue polypeptide: Killer cell immunoglobulin-like receptor 2DS5 (304 aa).

Positions 1 to 21 (MSLMVISMACVAFFLLQGAWP) are cleaved as a signal peptide. At 22 to 245 (HEGFRRKPSL…SETGNPRHLH (224 aa)) the chain is on the extracellular side. Ig-like C2-type domains follow at residues 42–107 (EETV…VTHS) and 142–205 (GESV…FRDS). Intrachain disulfides connect Cys49/Cys100 and Cys149/Cys198. Residues Asn67, Asn84, Asn178, and Asn223 are each glycosylated (N-linked (GlcNAc...) asparagine). The chain crosses the membrane as a helical span at residues 246–264 (VLIGTSVVKLPFTILLFFL). Topologically, residues 265–304 (LHRWCSNKKNASVMDQGPAGNRTVNREDSDEQDHQEVSYA) are cytoplasmic. A disordered region spans residues 275-304 (ASVMDQGPAGNRTVNREDSDEQDHQEVSYA). The segment covering 288–304 (VNREDSDEQDHQEVSYA) has biased composition (basic and acidic residues).

This sequence belongs to the immunoglobulin superfamily. In terms of assembly, interacts with TYROBP. In terms of processing, N-glycosylated, glycosylation varies depending on the allele which alters cell surface expression levels. As to expression, expressed on a discrete subset of peripheral blood NK cells.

The protein resides in the cell membrane. Activating natural killer (NK) receptor that recognizes C2 epitopes of HLA-C alleles. Bridging the innate and adaptive immune systems, NK cells express a number of cell surface receptors which either inhibit or stimulate their cytotoxicity. Able to activate NK cells citotoxicity and cytokine production such as IFNG. Receptor functions are attenuated even lost in some alleles, such as KIR2DS5*002 represented in this entry. This is Killer cell immunoglobulin-like receptor 2DS5 from Homo sapiens (Human).